A 680-amino-acid polypeptide reads, in one-letter code: Conserved oligomeric Golgi complex subunit 6 (680 aa).

A disordered region spans residues 479-517; that stretch reads HKSKKSGQLPRRSRTSSDSSQLTSVDALLSSSPSPPQNN.

The protein belongs to the COG6 family. As to quaternary structure, component of the conserved oligomeric Golgi complex which is composed of eight different subunits and is required for normal Golgi morphology and localization. Interacts with COG5, COG7 and COG8.

The protein resides in the golgi apparatus membrane. Its function is as follows. Required for normal Golgi function. The polypeptide is Conserved oligomeric Golgi complex subunit 6 (Arabidopsis thaliana (Mouse-ear cress)).